We begin with the raw amino-acid sequence, 362 residues long: Type II methyltransferase M.MamI (362 aa).

The protein belongs to the N(4)/N(6)-methyltransferase family.

The enzyme catalyses a 2'-deoxyadenosine in DNA + S-adenosyl-L-methionine = an N(6)-methyl-2'-deoxyadenosine in DNA + S-adenosyl-L-homocysteine + H(+). Functionally, a gamma subtype methylase that recognizes the double-stranded sequence 5'-GATNNNNATC-3', methylates A-? on both strands, and protects the DNA from cleavage by the MamI endonuclease. In Microbacterium ammoniaphilum, this protein is Type II methyltransferase M.MamI.